The primary structure comprises 361 residues: Probable S-adenosylmethionine-dependent methyltransferase At5g38780 (361 aa).

Residues Tyr-19, Cys-64, Asn-69, Asp-106, Leu-107, Ser-135, and Phe-136 each coordinate S-adenosyl-L-homocysteine. Mg(2+) contacts are provided by Asn-174, Glu-260, Phe-262, and Asn-263.

This sequence belongs to the methyltransferase superfamily. Type-7 methyltransferase family. In terms of assembly, homodimer. Mg(2+) is required as a cofactor.

This Arabidopsis thaliana (Mouse-ear cress) protein is Probable S-adenosylmethionine-dependent methyltransferase At5g38780.